Here is a 193-residue protein sequence, read N- to C-terminus: dCTP deaminase, dUMP-forming (193 aa).

DCTP-binding positions include 101–106 (KSSLGR), aspartate 119, 127–129 (TLE), glutamine 148, tyrosine 162, and glutamine 174. Catalysis depends on glutamate 129, which acts as the Proton donor/acceptor. The tract at residues 160-193 (TPYGSGSLGSKYQGQRGPTPSKGYLNFSSEQDSD) is disordered. The segment covering 167–177 (LGSKYQGQRGP) has biased composition (polar residues).

It belongs to the dCTP deaminase family. In terms of assembly, homotrimer.

The catalysed reaction is dCTP + 2 H2O = dUMP + NH4(+) + diphosphate. Its pathway is pyrimidine metabolism; dUMP biosynthesis; dUMP from dCTP: step 1/1. Its function is as follows. Bifunctional enzyme that catalyzes both the deamination of dCTP to dUTP and the hydrolysis of dUTP to dUMP without releasing the toxic dUTP intermediate. The polypeptide is dCTP deaminase, dUMP-forming (Corynebacterium efficiens (strain DSM 44549 / YS-314 / AJ 12310 / JCM 11189 / NBRC 100395)).